Consider the following 489-residue polypeptide: MSVWNAVHLSRRFAALPQAFYTPVHPQPLQNVRWGMWNSRLAQQFGLPEAPNDELLLSLSGQQLPADFSPVAMKYAGHQFGVYNPDLGDGRGLLLAEMATKQGEVFDIHLKGAGLTPYSRMGDGRAVLRSSLREYLCSEAMAGLGIATTRALALMSSETPVYREREERGALLVRLAHTHVRFGHFEHFFYTDQHANLKLLADKVIEWHFPDCVQTSKPYAAWFSQVVERTALMIAQWQAYGFNHGVMNTDNMSILGETFDYGPFAFLDDYDPNFICNHSDYQGRYAFDQQPRIGLWNLSALAHALSPLIDKDDLEAALGSYSERLNLHFSRLMRAKLGLATQQEGDGELFADFFALLANNHTDYTRFLRELSCLDRQGNEAVIDLVLDREAAKTWLTRYLERAARELGQEGRPISTRERCQAMRQVNPKYILRNYLAQQAIEFAERGDFEEMQRLATVLASPYAEHPEFERYAKLPPEWGKKLEISCSS.

ATP contacts are provided by Gly88, Gly90, Arg91, Lys111, Asp123, Gly124, Arg174, and Arg181. Catalysis depends on Asp250, which acts as the Proton acceptor. Mg(2+) is bound by residues Asn251 and Asp260. Residue Asp260 coordinates ATP.

The protein belongs to the SELO family. Requires Mg(2+) as cofactor. The cofactor is Mn(2+).

The enzyme catalyses L-seryl-[protein] + ATP = 3-O-(5'-adenylyl)-L-seryl-[protein] + diphosphate. The catalysed reaction is L-threonyl-[protein] + ATP = 3-O-(5'-adenylyl)-L-threonyl-[protein] + diphosphate. It catalyses the reaction L-tyrosyl-[protein] + ATP = O-(5'-adenylyl)-L-tyrosyl-[protein] + diphosphate. It carries out the reaction L-histidyl-[protein] + UTP = N(tele)-(5'-uridylyl)-L-histidyl-[protein] + diphosphate. The enzyme catalyses L-seryl-[protein] + UTP = O-(5'-uridylyl)-L-seryl-[protein] + diphosphate. The catalysed reaction is L-tyrosyl-[protein] + UTP = O-(5'-uridylyl)-L-tyrosyl-[protein] + diphosphate. In terms of biological role, nucleotidyltransferase involved in the post-translational modification of proteins. It can catalyze the addition of adenosine monophosphate (AMP) or uridine monophosphate (UMP) to a protein, resulting in modifications known as AMPylation and UMPylation. This is Protein nucleotidyltransferase YdiU from Vibrio cholerae serotype O1 (strain ATCC 39315 / El Tor Inaba N16961).